Consider the following 762-residue polypeptide: Palmitoyltransferase ZDHHC8 (762 aa).

Residues 1 to 13 lie on the Cytoplasmic side of the membrane; the sequence is MPRSPGTRLKPAK. A helical membrane pass occupies residues 14–34; it reads YIPVATAAALLVGSSTLFFVF. The Lumenal portion of the chain corresponds to 35 to 52; sequence TCPWLTRAVSPAIPVYNG. The chain crosses the membrane as a helical span at residues 53 to 73; that stretch reads ILFLFVLANFSMATFMDPGVF. At 74–148 the chain is on the cytoplasmic side; it reads PRADEDEDKE…NCIGRRNYRY (75 aa). The DHHC domain occupies 104-154; it reads KWCATCHFYRPPRCSHCSVCDNCVEDFDHHCPWVNNCIGRRNYRYFFLFLL. Cys134 functions as the S-palmitoyl cysteine intermediate in the catalytic mechanism. The chain crosses the membrane as a helical span at residues 149–169; that stretch reads FFLFLLSLSAHMVGVVAFGLL. Residues 170–190 lie on the Lumenal side of the membrane; sequence YVLNHSEGLGAAHTTITMAVM. A helical membrane pass occupies residues 191–211; the sequence is CVAGLFFIPVIGLTGFHVVLV. Topologically, residues 212–762 are cytoplasmic; that stretch reads TRGRTTNEQV…VGGTTYEISV (551 aa). Disordered regions lie at residues 289 to 350, 362 to 423, 436 to 537, and 551 to 574; these read GLKA…PPTP, GPKT…TTDA, ASRR…SPVR, and ERKD…GDSG. Position 335 is a phosphoserine (Ser335). Residues 408–417 show a composition bias toward pro residues; that stretch reads LRPPYPPSPP. Arg439 bears the Omega-N-methylarginine mark. Residues 471-485 show a composition bias toward polar residues; the sequence is RNGSLSYDSLLNPGS. A compositionally biased stretch (pro residues) spans 511–521; sequence PSDPPRPPPRS. Over residues 551–562 the composition is skewed to basic and acidic residues; it reads ERKDREERERLL. Phosphoserine occurs at positions 603 and 624. Positions 626 to 644 are enriched in low complexity; that stretch reads SSLSSSMSRAPRTSSSSLQ. 2 disordered regions span residues 626–684 and 707–744; these read SSLS…SYTG and DHPQ…PARH. Ser672, Ser679, Ser722, and Ser740 each carry phosphoserine.

This sequence belongs to the DHHC palmitoyltransferase family. ERF2/ZDHHC9 subfamily. In terms of tissue distribution, expressed in brain cortex and hippocampus.

It localises to the golgi apparatus membrane. It is found in the mitochondrion membrane. It catalyses the reaction L-cysteinyl-[protein] + hexadecanoyl-CoA = S-hexadecanoyl-L-cysteinyl-[protein] + CoA. Functionally, palmitoyltransferase that catalyzes the addition of palmitate onto various protein substrates and therefore functions in several unrelated biological processes. Through the palmitoylation of ABCA1 regulates the localization of the transporter to the plasma membrane and thereby regulates its function in cholesterol and phospholipid efflux. Could also pamitoylate the D(2) dopamine receptor DRD2 and regulate its stability and localization to the plasma membrane. Could also play a role in glutamatergic transmission. The protein is Palmitoyltransferase ZDHHC8 of Mus musculus (Mouse).